A 221-amino-acid chain; its full sequence is Octanoyltransferase (221 aa).

The region spanning 14–202 is the BPL/LPL catalytic domain; sequence GVRPDTLWFL…MLGARNAPHP (189 aa). Residues 54-61, 128-130, and 141-143 each bind substrate; these read RGGLLTYH, SIG, and GFA. The Acyl-thioester intermediate role is filled by cysteine 159. Positions 197–221 are disordered; that stretch reads RNAPHPPAPNLSSGDLGTGTRAGRT.

The protein belongs to the LipB family.

Its subcellular location is the cytoplasm. It carries out the reaction octanoyl-[ACP] + L-lysyl-[protein] = N(6)-octanoyl-L-lysyl-[protein] + holo-[ACP] + H(+). It functions in the pathway protein modification; protein lipoylation via endogenous pathway; protein N(6)-(lipoyl)lysine from octanoyl-[acyl-carrier-protein]: step 1/2. Its function is as follows. Catalyzes the transfer of endogenously produced octanoic acid from octanoyl-acyl-carrier-protein onto the lipoyl domains of lipoate-dependent enzymes. Lipoyl-ACP can also act as a substrate although octanoyl-ACP is likely to be the physiological substrate. In Frankia casuarinae (strain DSM 45818 / CECT 9043 / HFP020203 / CcI3), this protein is Octanoyltransferase.